Consider the following 566-residue polypeptide: Phenylalanine--tRNA ligase beta subunit (566 aa).

A B5 domain is found at 287-362 (YFQEEVEFNV…IGEGLSSFNP (76 aa)). Mg(2+) is bound by residues aspartate 340, aspartate 346, glutamate 349, and aspartate 350.

This sequence belongs to the phenylalanyl-tRNA synthetase beta subunit family. Type 2 subfamily. In terms of assembly, tetramer of two alpha and two beta subunits. Mg(2+) serves as cofactor.

The protein localises to the cytoplasm. It carries out the reaction tRNA(Phe) + L-phenylalanine + ATP = L-phenylalanyl-tRNA(Phe) + AMP + diphosphate + H(+). This Borreliella burgdorferi (strain ZS7) (Borrelia burgdorferi) protein is Phenylalanine--tRNA ligase beta subunit.